A 369-amino-acid chain; its full sequence is 3-dehydroquinate synthase (369 aa).

Residues 110–114 (GVIGD), 134–135 (TT), Lys-147, Lys-156, and 174–177 (TLKT) each bind NAD(+). Zn(2+) contacts are provided by Glu-189, His-254, and His-271.

This sequence belongs to the sugar phosphate cyclases superfamily. Dehydroquinate synthase family. It depends on Co(2+) as a cofactor. Zn(2+) serves as cofactor. Requires NAD(+) as cofactor.

Its subcellular location is the cytoplasm. The enzyme catalyses 7-phospho-2-dehydro-3-deoxy-D-arabino-heptonate = 3-dehydroquinate + phosphate. It participates in metabolic intermediate biosynthesis; chorismate biosynthesis; chorismate from D-erythrose 4-phosphate and phosphoenolpyruvate: step 2/7. Catalyzes the conversion of 3-deoxy-D-arabino-heptulosonate 7-phosphate (DAHP) to dehydroquinate (DHQ). The polypeptide is 3-dehydroquinate synthase (Cyanothece sp. (strain PCC 7425 / ATCC 29141)).